The chain runs to 157 residues: Endoribonuclease YbeY (157 aa).

Zn(2+) is bound by residues histidine 122, histidine 126, and histidine 132.

Belongs to the endoribonuclease YbeY family. Zn(2+) serves as cofactor.

It localises to the cytoplasm. Single strand-specific metallo-endoribonuclease involved in late-stage 70S ribosome quality control and in maturation of the 3' terminus of the 16S rRNA. This chain is Endoribonuclease YbeY, found in Lysinibacillus sphaericus (strain C3-41).